The following is a 1024-amino-acid chain: Error-prone DNA polymerase (1024 aa).

The protein belongs to the DNA polymerase type-C family. DnaE2 subfamily.

It localises to the cytoplasm. It carries out the reaction DNA(n) + a 2'-deoxyribonucleoside 5'-triphosphate = DNA(n+1) + diphosphate. DNA polymerase involved in damage-induced mutagenesis and translesion synthesis (TLS). It is not the major replicative DNA polymerase. This chain is Error-prone DNA polymerase, found in Vibrio campbellii (strain ATCC BAA-1116).